A 148-amino-acid polypeptide reads, in one-letter code: Large ribosomal subunit protein bL9 (148 aa).

Belongs to the bacterial ribosomal protein bL9 family.

Binds to the 23S rRNA. This Bacillus mycoides (strain KBAB4) (Bacillus weihenstephanensis) protein is Large ribosomal subunit protein bL9.